The sequence spans 166 residues: Ureidoglycolate lyase (166 aa).

Belongs to the ureidoglycolate lyase family. In terms of assembly, homodimer. The cofactor is Ni(2+).

The catalysed reaction is (S)-ureidoglycolate = urea + glyoxylate. Its pathway is nitrogen metabolism; (S)-allantoin degradation. In terms of biological role, catalyzes the catabolism of the allantoin degradation intermediate (S)-ureidoglycolate, generating urea and glyoxylate. Involved in the utilization of allantoin as nitrogen source. This chain is Ureidoglycolate lyase, found in Rhizobium etli (strain CIAT 652).